The chain runs to 320 residues: MDYRVLLYYKYVTIDDPETFAAEHLKFCKEHHLKGRILVSTEGINGTLSGTKEDTDKYIEHMHADNRFADLTFKIDEAESHAFKKMHVRPRREIVALDLEEDINPREITGKYYSPKEFKAALEDENTVILDARNDYEYDLGHFRGAIRPDITRFRDLPEWVRNNKEQLDGKNIVTYCTGGIRCEKFSGWLVKEGFENVGQLHGGIATYGKDPETKGQYWDGKMYVFDERISVDVNQIDKTVIGKEHFDGTPCERYINCANPECNKQILVSEENEEKYLGACSYDCAKHERNRYVARHHISNEEWQRRLNNFKDVPEHTHA.

The region spanning 123–217 (EDENTVILDA…YGKDPETKGQ (95 aa)) is the Rhodanese domain. Cysteine 177 functions as the Cysteine persulfide intermediate in the catalytic mechanism.

It belongs to the TrhO family.

The catalysed reaction is uridine(34) in tRNA + AH2 + O2 = 5-hydroxyuridine(34) in tRNA + A + H2O. Catalyzes oxygen-dependent 5-hydroxyuridine (ho5U) modification at position 34 in tRNAs. This is tRNA uridine(34) hydroxylase from Staphylococcus epidermidis (strain ATCC 12228 / FDA PCI 1200).